Consider the following 750-residue polypeptide: MKEKIKLSLLILTSIILAVANSQTQPKTLAMTATVYDQHTFYNDNFENQGPAYLTKNMVVSKLDKTLKIPQLVSLDINVEGKTGVNYFGTMYNPKLFKYFFSENTNASPDDKNSGKNFPLLMDLILTLNETSGAYEFSKQEYFPINGKGFNDPSYKVPPKYKADSPNVDWFKMAGGGYSQNNYNYCIKLNSKFTYFNKGEVFNFRGDDDVWVFIDNRLVVDLGGLHTAETANIKLKDITNPPLQTNKIYDLDFFYCERRATGSSIQLSTTLEIFCVDDYCGVCNGDGTSCCTSSTCEDNNACTIDKCPKLGSVAPGKFTKDDCVYSEVVCPIESNQCLRPYCDPKEGCKTSPVECVNGNIDKCFEQFGSCDSSLGCQYNYKCNAYGKCNLGCSGGQCKVKTSEQCSEEFGNDPCYTYSCDVELGCVRTEKCSQEDAKLCTINTCLKNVTREDDRCELVSIQEECNCCAGHTVDPCQLPGCGEPGECKPVDKIIDDNNLCTIDKCENGTITHTPVKCGGCSICDSKTGQCVINPPICDDDNVCTIDTCSLVENPNGSIDGVCSNKIFDCASNDTDLCNIWTCDANNGGCQSIKKVCDDPSPCLVSKCEPSTGQCVDSPRTCDHGGAFCLISECDERLGCIVYNRQCASDNRKCQAGVCVNGTSSEEGHCTSVDYDPLPFGCNTAAVVSTAVIAGVTVAAVVGLGIFLYGGKKGYDYYQDNKSKGMTGANSNPLYKESGNAGQNPLYNDNNL.

The first 22 residues, 1–22 (MKEKIKLSLLILTSIILAVANS), serve as a signal peptide directing secretion. Over 23–688 (QTQPKTLAMT…GCNTAAVVST (666 aa)) the chain is Extracellular. An N-linked (GlcNAc...) asparagine glycan is attached at Asn129. The PA14 domain occupies 140-286 (QEYFPINGKG…DDYCGVCNGD (147 aa)). Asn447, Asn506, Asn554, Asn571, and Asn659 each carry an N-linked (GlcNAc...) asparagine glycan. The chain crosses the membrane as a helical span at residues 689-709 (AVIAGVTVAAVVGLGIFLYGG). Residues 710–750 (KKGYDYYQDNKSKGMTGANSNPLYKESGNAGQNPLYNDNNL) lie on the Cytoplasmic side of the membrane. Positions 727-750 (ANSNPLYKESGNAGQNPLYNDNNL) are disordered. A compositionally biased stretch (polar residues) spans 738–750 (NAGQNPLYNDNNL).

Belongs to the prespore-cell-inducing factor family.

The protein localises to the membrane. This is Protein psiO (psiO) from Dictyostelium discoideum (Social amoeba).